The following is a 474-amino-acid chain: Ankyrin repeat, SAM and basic leucine zipper domain-containing protein 1 (474 aa).

The segment at 1–31 (MAGRLRGPAVPGGGESSDSDEDGWDIGYTER) is disordered. 3 positions are modified to phosphoserine: serine 16, serine 17, and serine 19. ANK repeat units lie at residues 43 to 72 (EKDE…QVDS), 76 to 105 (FGWT…NASF), 108 to 142 (DQHT…SPNA), 146 to 175 (KRMS…EINA), 179 to 208 (NGYT…DKTL), and 212 to 241 (DGKT…PLHG). Residues 270-333 (SYSAFGDLEI…KIMDAVEELQ (64 aa)) form the SAM domain.

Interacts with DDX4, PIWIL1, RANBP9 and TDRD1.

The protein resides in the cytoplasm. In terms of biological role, plays a central role during spermatogenesis by repressing transposable elements and preventing their mobilization, which is essential for the germline integrity. Acts via the piRNA metabolic process, which mediates the repression of transposable elements during meiosis by forming complexes composed of piRNAs and Piwi proteins and governs the methylation and subsequent repression of transposons. Its association with pi-bodies suggests a participation in the primary piRNAs metabolic process. Required prior to the pachytene stage to facilitate the production of multiple types of piRNAs, including those associated with repeats involved in the regulation of retrotransposons. May act by mediating protein-protein interactions during germ cell maturation. This is Ankyrin repeat, SAM and basic leucine zipper domain-containing protein 1 (ASZ1) from Ornithorhynchus anatinus (Duckbill platypus).